A 353-amino-acid polypeptide reads, in one-letter code: Photosystem II D2 protein (353 aa).

Residue Thr-2 is modified to N-acetylthreonine. At Thr-2 the chain carries Phosphothreonine. Residues Cys-41–Thr-61 form a helical membrane-spanning segment. Residue His-118 coordinates chlorophyll a. Residues Gly-125–Pro-141 form a helical membrane-spanning segment. 2 residues coordinate pheophytin a: Gln-130 and Asn-143. The chain crosses the membrane as a helical span at residues Val-153–Ser-166. His-198 serves as a coordination point for chlorophyll a. The chain crosses the membrane as a helical span at residues Ala-208–Asp-228. Positions 215 and 262 each coordinate a plastoquinone. His-215 lines the Fe cation pocket. His-269 is a Fe cation binding site. A helical transmembrane segment spans residues Gly-279–Arg-295.

This sequence belongs to the reaction center PufL/M/PsbA/D family. As to quaternary structure, PSII is composed of 1 copy each of membrane proteins PsbA, PsbB, PsbC, PsbD, PsbE, PsbF, PsbH, PsbI, PsbJ, PsbK, PsbL, PsbM, PsbT, PsbX, PsbY, PsbZ, Psb30/Ycf12, at least 3 peripheral proteins of the oxygen-evolving complex and a large number of cofactors. It forms dimeric complexes. Requires The D1/D2 heterodimer binds P680, chlorophylls that are the primary electron donor of PSII, and subsequent electron acceptors. It shares a non-heme iron and each subunit binds pheophytin, quinone, additional chlorophylls, carotenoids and lipids. There is also a Cl(-1) ion associated with D1 and D2, which is required for oxygen evolution. The PSII complex binds additional chlorophylls, carotenoids and specific lipids. as cofactor.

It is found in the plastid. The protein localises to the chloroplast thylakoid membrane. The enzyme catalyses 2 a plastoquinone + 4 hnu + 2 H2O = 2 a plastoquinol + O2. In terms of biological role, photosystem II (PSII) is a light-driven water:plastoquinone oxidoreductase that uses light energy to abstract electrons from H(2)O, generating O(2) and a proton gradient subsequently used for ATP formation. It consists of a core antenna complex that captures photons, and an electron transfer chain that converts photonic excitation into a charge separation. The D1/D2 (PsbA/PsbD) reaction center heterodimer binds P680, the primary electron donor of PSII as well as several subsequent electron acceptors. D2 is needed for assembly of a stable PSII complex. The sequence is that of Photosystem II D2 protein from Arabis hirsuta (Hairy rock-cress).